We begin with the raw amino-acid sequence, 289 residues long: Thioredoxin-like protein 1 (289 aa).

Residues V2–N109 enclose the Thioredoxin domain. Residues C34 and C37 are joined by a disulfide bond. The residue at position 113 (S113) is a Phosphoserine. One can recognise a PITH domain in the interval E115–K285.

Component of the 19S regulatory cap of the 26S proteasome. Interacts with PSMD14/RPN11. Interacts with, and reduces EEF1A1.

It localises to the cytoplasm. It is found in the nucleus. Functionally, active thioredoxin with a redox potential of about -250 mV. This chain is Thioredoxin-like protein 1 (Txnl1), found in Mus musculus (Mouse).